The sequence spans 126 residues: Large ribosomal subunit protein uL22 (126 aa).

It belongs to the universal ribosomal protein uL22 family. As to quaternary structure, part of the 50S ribosomal subunit.

Its function is as follows. This protein binds specifically to 23S rRNA; its binding is stimulated by other ribosomal proteins, e.g. L4, L17, and L20. It is important during the early stages of 50S assembly. It makes multiple contacts with different domains of the 23S rRNA in the assembled 50S subunit and ribosome. In terms of biological role, the globular domain of the protein is located near the polypeptide exit tunnel on the outside of the subunit, while an extended beta-hairpin is found that lines the wall of the exit tunnel in the center of the 70S ribosome. The protein is Large ribosomal subunit protein uL22 of Cereibacter sphaeroides (strain ATCC 17029 / ATH 2.4.9) (Rhodobacter sphaeroides).